Reading from the N-terminus, the 513-residue chain is Cytochrome P450 705A1 (513 aa).

Residues 9–29 form a helical membrane-spanning segment; that stretch reads QNCFIIILLCSFSLISYFVFF. Cys-448 serves as a coordination point for heme.

Belongs to the cytochrome P450 family. Requires heme as cofactor. As to expression, expressed in root stele, root cortex, root epidermis, root pericycle of the root hair zone, and quiescent center at the root meristematic zone.

The protein resides in the membrane. Functionally, cleaves the arabidiol side chain at C15 to form 14-apo-arabidiol and a side-chain fragment. Involved in the biosynthesis of the volatile homoterpene (E)-4,8-dimethyl-1,3,7-nonatriene (DMNT) in roots. Involved in the production of DMNT by degrading the triterpene arabidiol. May be involved in the defense again the fungal root pathogen Pythium irregulare by producing DMNT. This chain is Cytochrome P450 705A1, found in Arabidopsis thaliana (Mouse-ear cress).